The chain runs to 181 residues: Ribulose bisphosphate carboxylase small subunit, chloroplastic (181 aa).

Residues 1-56 (MASISSSAIATVNRTTSTQASLAAPFTGLKSNVAFPVTKKANNDFSSLPSNGGRVQ) constitute a chloroplast transit peptide.

It belongs to the RuBisCO small chain family. As to quaternary structure, heterohexadecamer of 8 large and 8 small subunits.

It localises to the plastid. It is found in the chloroplast. Functionally, ruBisCO catalyzes two reactions: the carboxylation of D-ribulose 1,5-bisphosphate, the primary event in carbon dioxide fixation, as well as the oxidative fragmentation of the pentose substrate. Both reactions occur simultaneously and in competition at the same active site. Although the small subunit is not catalytic it is essential for maximal activity. This chain is Ribulose bisphosphate carboxylase small subunit, chloroplastic, found in Lactuca sativa (Garden lettuce).